We begin with the raw amino-acid sequence, 155 residues long: Large ribosomal subunit protein uL11 (155 aa).

The protein belongs to the universal ribosomal protein uL11 family. In terms of assembly, part of the ribosomal stalk of the 50S ribosomal subunit. Interacts with L10 and the large rRNA to form the base of the stalk. L10 forms an elongated spine to which L12 dimers bind in a sequential fashion forming a multimeric L10(L12)X complex.

In terms of biological role, forms part of the ribosomal stalk which helps the ribosome interact with GTP-bound translation factors. This is Large ribosomal subunit protein uL11 from Picrophilus torridus (strain ATCC 700027 / DSM 9790 / JCM 10055 / NBRC 100828 / KAW 2/3).